Reading from the N-terminus, the 365-residue chain is NAD(P)H-quinone oxidoreductase subunit 1, chloroplastic (365 aa).

The next 6 helical transmembrane spans lie at 32–52 (LFPILILVLGITIGVLVIVWL), 98–118 (YLFSIGPSIAVISILLGYLII), 129–149 (LSIGVFLWIAVSSIAPIGLLM), 257–279 (LFYVASYLNLLISSLFVTVLYLG), 302–322 (VFGTTIGIFITLAKTFLFLFI), and 338–358 (LLNLGWKFLLPISLGNLLLTT).

Belongs to the complex I subunit 1 family. As to quaternary structure, NDH is composed of at least 16 different subunits, 5 of which are encoded in the nucleus.

The protein resides in the plastid. The protein localises to the chloroplast thylakoid membrane. It carries out the reaction a plastoquinone + NADH + (n+1) H(+)(in) = a plastoquinol + NAD(+) + n H(+)(out). The catalysed reaction is a plastoquinone + NADPH + (n+1) H(+)(in) = a plastoquinol + NADP(+) + n H(+)(out). In terms of biological role, NDH shuttles electrons from NAD(P)H:plastoquinone, via FMN and iron-sulfur (Fe-S) centers, to quinones in the photosynthetic chain and possibly in a chloroplast respiratory chain. The immediate electron acceptor for the enzyme in this species is believed to be plastoquinone. Couples the redox reaction to proton translocation, and thus conserves the redox energy in a proton gradient. The polypeptide is NAD(P)H-quinone oxidoreductase subunit 1, chloroplastic (Spinacia oleracea (Spinach)).